The chain runs to 157 residues: Small ribosomal subunit protein uS7 (157 aa).

It belongs to the universal ribosomal protein uS7 family. Part of the 30S ribosomal subunit. Contacts proteins S9 and S11.

Its function is as follows. One of the primary rRNA binding proteins, it binds directly to 16S rRNA where it nucleates assembly of the head domain of the 30S subunit. Is located at the subunit interface close to the decoding center, probably blocks exit of the E-site tRNA. The chain is Small ribosomal subunit protein uS7 from Caulobacter vibrioides (strain ATCC 19089 / CIP 103742 / CB 15) (Caulobacter crescentus).